The chain runs to 150 residues: Large ribosomal subunit protein bL9 (150 aa).

It belongs to the bacterial ribosomal protein bL9 family.

Its function is as follows. Binds to the 23S rRNA. The polypeptide is Large ribosomal subunit protein bL9 (Buchnera aphidicola subsp. Schizaphis graminum (strain Sg)).